The chain runs to 346 residues: N-acetyl-gamma-glutamyl-phosphate reductase (346 aa).

Residue Cys149 is part of the active site.

The protein belongs to the NAGSA dehydrogenase family. Type 1 subfamily.

It localises to the cytoplasm. It carries out the reaction N-acetyl-L-glutamate 5-semialdehyde + phosphate + NADP(+) = N-acetyl-L-glutamyl 5-phosphate + NADPH + H(+). Its pathway is amino-acid biosynthesis; L-arginine biosynthesis; N(2)-acetyl-L-ornithine from L-glutamate: step 3/4. Functionally, catalyzes the NADPH-dependent reduction of N-acetyl-5-glutamyl phosphate to yield N-acetyl-L-glutamate 5-semialdehyde. This Pelobacter propionicus (strain DSM 2379 / NBRC 103807 / OttBd1) protein is N-acetyl-gamma-glutamyl-phosphate reductase.